A 104-amino-acid chain; its full sequence is Large ribosomal subunit protein uL24 (104 aa).

Belongs to the universal ribosomal protein uL24 family. Part of the 50S ribosomal subunit.

Functionally, one of two assembly initiator proteins, it binds directly to the 5'-end of the 23S rRNA, where it nucleates assembly of the 50S subunit. Its function is as follows. One of the proteins that surrounds the polypeptide exit tunnel on the outside of the subunit. This chain is Large ribosomal subunit protein uL24, found in Bartonella tribocorum (strain CIP 105476 / IBS 506).